The sequence spans 344 residues: Lipopolysaccharide heptosyltransferase 3 (344 aa).

This sequence belongs to the glycosyltransferase 9 family.

The catalysed reaction is an L-alpha-D-Hep-(1-&gt;3)-4-O-phospho-L-alpha-D-Hep-(1-&gt;5)-[alpha-Kdo-(2-&gt;4)]-alpha-Kdo-(2-&gt;6)-lipid A + ADP-L-glycero-beta-D-manno-heptose = an L-alpha-D-Hep-(1-&gt;7)-L-alpha-D-Hep-(1-&gt;3)-4-O-phospho-L-alpha-D-Hep-(1-&gt;5)-[alpha-Kdo-(2-&gt;4)]-alpha-Kdo-(2-&gt;6)-lipid A + ADP + H(+). It carries out the reaction L-alpha-D-Hep-(1-&gt;3)-4-O-phospho-L-alpha-D-Hep-(1-&gt;5)-[alpha-Kdo-(2-&gt;4)]-alpha-Kdo-(2-&gt;6)-lipid A (E. coli) + ADP-L-glycero-beta-D-manno-heptose = L-alpha-D-Hep-(1-&gt;7)-L-alpha-D-Hep-(1-&gt;3)-4-O-phospho-L-alpha-D-Hep-(1-&gt;5)-[alpha-Kdo-(2-&gt;4)]-alpha-Kdo-(2-&gt;6)-lipid A (E. coli) + ADP + H(+). Its pathway is bacterial outer membrane biogenesis; LPS core biosynthesis. In terms of biological role, glycosyltransferase involved in the biosynthesis of the core oligosaccharide region of lipopolysaccharide (LPS). Catalyzes the addition of the third heptose unit (HepIII) to the second heptose unit (HepII) of the phospho-Hep2-Kdo2-lipid A module. This Escherichia coli (strain K12) protein is Lipopolysaccharide heptosyltransferase 3.